A 78-amino-acid chain; its full sequence is MSRVCQVTGKRPVTGNNRSHARNATKRRFLPNLQTHRFWVESEKRFVKLRLTAKGMRIIDKKGIDIVLAEMRVRGESV.

Residues 1–20 (MSRVCQVTGKRPVTGNNRSH) form a disordered region.

This sequence belongs to the bacterial ribosomal protein bL28 family.

The chain is Large ribosomal subunit protein bL28 from Photobacterium profundum (strain SS9).